The following is a 388-amino-acid chain: Acyl-CoA dehydrogenase fadE12 (388 aa).

The protein belongs to the acyl-CoA dehydrogenase family. It depends on FAD as a cofactor.

It carries out the reaction a 2,3-saturated acyl-CoA + A = a 2,3-dehydroacyl-CoA + AH2. The polypeptide is Acyl-CoA dehydrogenase fadE12 (fadE12) (Mycobacterium bovis (strain ATCC BAA-935 / AF2122/97)).